The primary structure comprises 99 residues: Aphid transmission protein (99 aa).

Belongs to the caulimoviridae ORF II family.

This protein is involved in virus transmission. The protein is Aphid transmission protein of Cauliflower mosaic virus (strain W260) (CaMV).